The following is a 128-amino-acid chain: Large-conductance mechanosensitive channel (128 aa).

Helical transmembrane passes span 11–31 (FALK…AAFG) and 70–90 (GAFI…FIFV).

It belongs to the MscL family. As to quaternary structure, homopentamer.

The protein localises to the cell membrane. Its function is as follows. Channel that opens in response to stretch forces in the membrane lipid bilayer. May participate in the regulation of osmotic pressure changes within the cell. The chain is Large-conductance mechanosensitive channel from Listeria monocytogenes serotype 4a (strain HCC23).